A 208-amino-acid chain; its full sequence is Uracil phosphoribosyltransferase (208 aa).

Residues Arg78, Arg103, and 130-138 (DPMLATGGS) contribute to the 5-phospho-alpha-D-ribose 1-diphosphate site. Uracil-binding positions include Ile193 and 198–200 (GDA). Asp199 provides a ligand contact to 5-phospho-alpha-D-ribose 1-diphosphate.

This sequence belongs to the UPRTase family. Requires Mg(2+) as cofactor.

It catalyses the reaction UMP + diphosphate = 5-phospho-alpha-D-ribose 1-diphosphate + uracil. It functions in the pathway pyrimidine metabolism; UMP biosynthesis via salvage pathway; UMP from uracil: step 1/1. With respect to regulation, allosterically activated by GTP. Functionally, catalyzes the conversion of uracil and 5-phospho-alpha-D-ribose 1-diphosphate (PRPP) to UMP and diphosphate. This chain is Uracil phosphoribosyltransferase, found in Histophilus somni (strain 129Pt) (Haemophilus somnus).